The chain runs to 153 residues: MAGFIGKEKHAVDEKGRLMIPARFRRKFPETSGSLASKKEPASLYVMKSPDSSLELYLPDVWEEMARTISALSDFHPDERLLKTLMYESLEMVELDRQGRIPLSREFLDHAGITRDVVIIGADTKMIVWEPGRLSEVLEGSSGRFAALAGRYF.

SpoVT-AbrB domains are found at residues 7-61 (KEKH…LPDV) and 90-133 (LEMV…EPGR).

The protein belongs to the MraZ family. As to quaternary structure, forms oligomers.

Its subcellular location is the cytoplasm. It localises to the nucleoid. The sequence is that of Transcriptional regulator MraZ from Chlorobium luteolum (strain DSM 273 / BCRC 81028 / 2530) (Pelodictyon luteolum).